Here is a 780-residue protein sequence, read N- to C-terminus: ATP-dependent 6-phosphofructokinase, liver type (780 aa).

Ala2 is modified (N-acetylalanine). The segment at 2-390 is N-terminal catalytic PFK domain 1; sequence ATVDLEKLRM…NWKIYKLLAH (389 aa). ATP contacts are provided by residues Gly25, 88–89, and 118–121; these read RC and GDGS. Asp119 contributes to the Mg(2+) binding site. Substrate-binding positions include 164–166, Arg201, 208–210, Glu264, Arg292, and 298–301; these read SID, MGR, and HVQR. Asp166 serves as the catalytic Proton acceptor. Ser377 bears the Phosphoserine mark. The segment at 391–400 is interdomain linker; the sequence is QKVSKEKSNF. The C-terminal regulatory PFK domain 2 stretch occupies residues 401 to 780; the sequence is SLAILNVGAP…RRTLSIDKGF (380 aa). Residues Arg470, 527 to 531, Arg565, 572 to 574, and Glu628 each bind beta-D-fructose 2,6-bisphosphate; these read TISNN and MGG. Ser529 carries O-linked (GlcNAc) serine glycosylation. Tyr640 is subject to Phosphotyrosine. Beta-D-fructose 2,6-bisphosphate contacts are provided by residues Arg654, 660–663, and Arg734; that span reads HLQQ. Ser775 is modified (phosphoserine).

It belongs to the phosphofructokinase type A (PFKA) family. ATP-dependent PFK group I subfamily. Eukaryotic two domain clade 'E' sub-subfamily. In terms of assembly, homo- and heterotetramers. Phosphofructokinase (PFK) enzyme functions as a tetramer composed of different combinations of 3 types of subunits, called PFKM (M), PFKL (L) and PFKP (P). The composition of the PFK tetramer differs according to the tissue type it is present in. The kinetic and regulatory properties of the tetrameric enzyme are dependent on the subunit composition, hence can vary across tissues. Mg(2+) serves as cofactor. Post-translationally, glcNAcylation at Ser-529 by OGT decreases enzyme activity, leading to redirect glucose flux through the oxidative pentose phosphate pathway. Glycosylation is stimulated by both hypoxia and glucose deprivation.

Its subcellular location is the cytoplasm. The enzyme catalyses beta-D-fructose 6-phosphate + ATP = beta-D-fructose 1,6-bisphosphate + ADP + H(+). Its pathway is carbohydrate degradation; glycolysis; D-glyceraldehyde 3-phosphate and glycerone phosphate from D-glucose: step 3/4. With respect to regulation, allosterically activated by ADP, AMP, or fructose 2,6-bisphosphate, and allosterically inhibited by ATP or citrate. GlcNAcylation by OGT overcomes allosteric regulation. Its function is as follows. Catalyzes the phosphorylation of D-fructose 6-phosphate to fructose 1,6-bisphosphate by ATP, the first committing step of glycolysis. Negatively regulates the phagocyte oxidative burst in response to bacterial infection by controlling cellular NADPH biosynthesis and NADPH oxidase-derived reactive oxygen species. Upon macrophage activation, drives the metabolic switch toward glycolysis, thus preventing glucose turnover that produces NADPH via pentose phosphate pathway. In Mus musculus (Mouse), this protein is ATP-dependent 6-phosphofructokinase, liver type.